Reading from the N-terminus, the 155-residue chain is Ribosomal RNA large subunit methyltransferase H (155 aa).

S-adenosyl-L-methionine is bound by residues L72, G103, and 122–127 (LSALTL).

The protein belongs to the RNA methyltransferase RlmH family. Homodimer.

The protein localises to the cytoplasm. It catalyses the reaction pseudouridine(1915) in 23S rRNA + S-adenosyl-L-methionine = N(3)-methylpseudouridine(1915) in 23S rRNA + S-adenosyl-L-homocysteine + H(+). Specifically methylates the pseudouridine at position 1915 (m3Psi1915) in 23S rRNA. The sequence is that of Ribosomal RNA large subunit methyltransferase H from Citrobacter koseri (strain ATCC BAA-895 / CDC 4225-83 / SGSC4696).